The sequence spans 175 residues: ATP synthase subunit b (175 aa).

Residues 14-34 (LSPNPGLIFWTTVSFVIVLLI) traverse the membrane as a helical segment.

This sequence belongs to the ATPase B chain family. As to quaternary structure, F-type ATPases have 2 components, F(1) - the catalytic core - and F(0) - the membrane proton channel. F(1) has five subunits: alpha(3), beta(3), gamma(1), delta(1), epsilon(1). F(0) has four main subunits: a(1), b(2) and c(10-14). The alpha and beta chains form an alternating ring which encloses part of the gamma chain. F(1) is attached to F(0) by a central stalk formed by the gamma and epsilon chains, while a peripheral stalk is formed by the delta and b chains.

It localises to the cell inner membrane. F(1)F(0) ATP synthase produces ATP from ADP in the presence of a proton or sodium gradient. F-type ATPases consist of two structural domains, F(1) containing the extramembraneous catalytic core and F(0) containing the membrane proton channel, linked together by a central stalk and a peripheral stalk. During catalysis, ATP synthesis in the catalytic domain of F(1) is coupled via a rotary mechanism of the central stalk subunits to proton translocation. Its function is as follows. Component of the F(0) channel, it forms part of the peripheral stalk, linking F(1) to F(0). The chain is ATP synthase subunit b from Chlorobium phaeobacteroides (strain DSM 266 / SMG 266 / 2430).